Consider the following 430-residue polypeptide: Dihydrolipoyllysine-residue acetyltransferase component of pyruvate dehydrogenase complex (430 aa).

The Lipoyl-binding domain maps to 2–77 (AFEFRLPDIG…VVGDVIVKID (76 aa)). An N6-lipoyllysine modification is found at K43. The tract at residues 80-122 (DAEDMQFKGHDDDSSSKEEPAKEEAPAEQAPVATQTEEVDENR) is disordered. Basic and acidic residues predominate over residues 84-104 (MQFKGHDDDSSSKEEPAKEEA). The 38-residue stretch at 125–162 (KAMPSVRKYAREKGVNIKAVSGSGKNGRITKEDVDAYL) folds into the Peripheral subunit-binding (PSBD) domain. The disordered stretch occupies residues 165 to 199 (GAPTASNESAASATNEEVAETPAAPAAVSLEGDFP). Residues 168 to 192 (TASNESAASATNEEVAETPAAPAAV) are compositionally biased toward low complexity. The active site involves H401.

The protein belongs to the 2-oxoacid dehydrogenase family. In terms of assembly, forms a 24-polypeptide structural core with octahedral symmetry. (R)-lipoate serves as cofactor.

It catalyses the reaction N(6)-[(R)-dihydrolipoyl]-L-lysyl-[protein] + acetyl-CoA = N(6)-[(R)-S(8)-acetyldihydrolipoyl]-L-lysyl-[protein] + CoA. The pyruvate dehydrogenase complex catalyzes the overall conversion of pyruvate to acetyl-CoA and CO(2). It contains multiple copies of three enzymatic components: pyruvate dehydrogenase (E1), dihydrolipoamide acetyltransferase (E2) and lipoamide dehydrogenase (E3). The sequence is that of Dihydrolipoyllysine-residue acetyltransferase component of pyruvate dehydrogenase complex (pdhC) from Staphylococcus aureus (strain MRSA252).